Here is a 269-residue protein sequence, read N- to C-terminus: 4-hydroxy-tetrahydrodipicolinate reductase (269 aa).

NAD(+) contacts are provided by residues 8–13 (GAAGRM) and Glu34. Arg35 contributes to the NADP(+) binding site. NAD(+)-binding positions include 98 to 100 (GTT) and 122 to 125 (APNY). His155 functions as the Proton donor/acceptor in the catalytic mechanism. (S)-2,3,4,5-tetrahydrodipicolinate is bound at residue His156. The active-site Proton donor is the Lys159. 165–166 (GT) is a (S)-2,3,4,5-tetrahydrodipicolinate binding site.

Belongs to the DapB family.

It localises to the cytoplasm. The catalysed reaction is (S)-2,3,4,5-tetrahydrodipicolinate + NAD(+) + H2O = (2S,4S)-4-hydroxy-2,3,4,5-tetrahydrodipicolinate + NADH + H(+). It carries out the reaction (S)-2,3,4,5-tetrahydrodipicolinate + NADP(+) + H2O = (2S,4S)-4-hydroxy-2,3,4,5-tetrahydrodipicolinate + NADPH + H(+). The protein operates within amino-acid biosynthesis; L-lysine biosynthesis via DAP pathway; (S)-tetrahydrodipicolinate from L-aspartate: step 4/4. Catalyzes the conversion of 4-hydroxy-tetrahydrodipicolinate (HTPA) to tetrahydrodipicolinate. This Vibrio atlanticus (strain LGP32) (Vibrio splendidus (strain Mel32)) protein is 4-hydroxy-tetrahydrodipicolinate reductase.